A 3515-amino-acid polypeptide reads, in one-letter code: Microtubule-actin cross-linking factor 1, isoforms 6/7 (3515 aa).

Disordered stretches follow at residues 1–23 (MGKP…KGEE), 108–136 (VQKS…WKSF), 155–196 (VSEA…TLEH), 965–1178 (TEED…AVPT), 1217–1298 (SPAA…SPAA), 1710–1730 (EELA…QFQQ), and 3078–3108 (PTHA…ILSQ). Residues 120–129 (PNAERKDNVN) are compositionally biased toward basic and acidic residues. The tract at residues 157 to 245 (EAGASNPSLQ…ESEAVATSGN (89 aa)) is 13 X 13 AA approximate tandem repeat of P-T-S-P-A-A-A-V-P-T-P-E-E. Composition is skewed to low complexity over residues 995–1031 (STPE…SPAA) and 1040–1139 (TSPA…AVPT). Tandem repeats lie at residues 1012 to 1024 (EPTS…PTPE), 1026 to 1037 (PTSPAAAVPPPE), 1038 to 1051 (EPTS…TPEE), 1052 to 1064 (PTSP…TPEE), 1065 to 1077 (PTSP…TPEE), 1078 to 1090 (PTSP…TPEE), 1091 to 1103 (PTSP…TPEE), 1104 to 1116 (PTSP…TPEE), 1117 to 1129 (PASP…TPEE), 1130 to 1142 (PASP…TPEE), 1143 to 1155 (PAFP…TPEE), 1156 to 1168 (SASA…TPEE), and 1169 to 1178 (SASPAAAVPT). The span at 1140–1151 (PEEPAFPAPAVP) shows a compositional bias: pro residues. 2 stretches are compositionally biased toward low complexity: residues 1162 to 1178 (AVPT…AVPT) and 1268 to 1298 (SSPA…SPAA). Positions 1715 to 1730 (SGGQSPTGEQIPQFQQ) are enriched in polar residues. 2 EF-hand domains span residues 3168 to 3203 (HKKS…SKFP) and 3204 to 3239 (TTKL…NKDA). The Ca(2+) site is built by Asp3181, Asp3183, Asp3185, Lys3187, Glu3192, Asp3217, Asp3219, Asp3221, Tyr3223, and Glu3228. One can recognise a GAR domain in the interval 3244–3316 (TDADKIEDEV…EFLVKNDPCR (73 aa)). Positions 3332-3515 (PEGASQGMTP…ASPRTPGPKR (184 aa)) are disordered. The segment covering 3352–3386 (SSRAASPTRSSSSASQSNHSCTSMPSSPATPASGT) has biased composition (low complexity). Residues 3402 to 3426 (TFHSSRTSLAGDTSNSSSPASTGAK) are compositionally biased toward polar residues. Residues 3437-3451 (SRPGSRAGSRAGSRA) show a composition bias toward low complexity. The segment covering 3466-3488 (ETQSACSDTSESSAAGGQGNSRR) has biased composition (polar residues).

Its subcellular location is the cytoplasm. The protein resides in the cytoskeleton. The protein is Microtubule-actin cross-linking factor 1, isoforms 6/7 of Homo sapiens (Human).